The primary structure comprises 346 residues: L-malyl-CoA/beta-methylmalyl-CoA lyase (346 aa).

Mg(2+) contacts are provided by glutamate 148 and aspartate 177. Substrate contacts are provided by residues 176-177 (VD) and 253-254 (LH).

Belongs to the HpcH/HpaI aldolase family. Mg(2+) serves as cofactor. Requires Mn(2+) as cofactor.

It carries out the reaction (S)-malyl-CoA = glyoxylate + acetyl-CoA. The enzyme catalyses (2R,3S)-beta-methylmalyl-CoA = propanoyl-CoA + glyoxylate. Functionally, involved in the methylaspartate cycle. Catalyzes the reversible cleavage of beta-methylmalyl-CoA to propionyl-CoA and glyoxylate, as well as the reversible cleavage of (S)-malyl-CoA to acetyl-CoA and glyoxylate. In addition, it has a small malyl-CoA thioesterase activity. It can also catalyze the cleavage of (S)-citramalyl-CoA to acetyl-CoA and pyruvate. In Haloarcula marismortui (strain ATCC 43049 / DSM 3752 / JCM 8966 / VKM B-1809) (Halobacterium marismortui), this protein is L-malyl-CoA/beta-methylmalyl-CoA lyase (citE1).